The following is a 505-amino-acid chain: Putative diacyglycerol O-acyltransferase MT0919 (505 aa).

Histidine 167 functions as the Proton acceptor in the catalytic mechanism.

Belongs to the long-chain O-acyltransferase family.

It catalyses the reaction an acyl-CoA + a 1,2-diacyl-sn-glycerol = a triacyl-sn-glycerol + CoA. It participates in glycerolipid metabolism; triacylglycerol biosynthesis. The protein is Putative diacyglycerol O-acyltransferase MT0919 of Mycobacterium tuberculosis (strain CDC 1551 / Oshkosh).